A 143-amino-acid polypeptide reads, in one-letter code: Ponticulin (143 aa).

The signal sequence occupies residues 1–22; that stretch reads MLVLRNLLALVTLALLFTLSSA. The N-linked (GlcNAc...) asparagine glycan is linked to asparagine 111. Serine 118 carries the GPI-like-anchor amidated serine lipid modification. The propeptide at 119–143 is removed in mature form; sequence SSGSTVMIGLASSLLFAFATLLALF.

This sequence belongs to the ponticulin family. Monomer. Disulfide bond(s) stabilize the native, actin-binding conformation of ponticulin. In terms of processing, the GPI-like-anchor contains a phosphoceramide group, rather than a phosphatidyl group.

It is found in the cell membrane. Functionally, binds F-actin and nucleates actin assembly. Major high affinity link between the plasma membrane and the cortical actin network. The chain is Ponticulin (ponA) from Dictyostelium discoideum (Social amoeba).